Consider the following 776-residue polypeptide: Serine/threonine-protein kinase-like protein CCR2 (776 aa).

Residues 1–22 form the signal peptide; the sequence is MQPNSHIFVIITISSLIITVSA. Over 23–432 the chain is Extracellular; the sequence is YGSTGTIAAA…QKEQREVRRL (410 aa). 8 N-linked (GlcNAc...) asparagine glycosylation sites follow: asparagine 59, asparagine 92, asparagine 154, asparagine 162, asparagine 205, asparagine 278, asparagine 287, and asparagine 350. The stretch at 341-396 is one TNFR-Cys repeat; sequence NCGDGWFAFNASILKESELTSLCSFHNLNICLRCGISCLEGYFPSSTCNPNADRVC. 3 disulfide bridges follow: cysteine 342-cysteine 371, cysteine 374-cysteine 388, and cysteine 378-cysteine 396. An N-linked (GlcNAc...) asparagine glycan is attached at asparagine 404. The helical transmembrane segment at 433 to 453 threads the bilayer; it reads VIIIGCSVLGFLVMLIGLSFI. Topologically, residues 454–776 are cytoplasmic; the sequence is PKMTKGSKRD…DLIVKSGLTF (323 aa). Positions 519 to 776 constitute a Protein kinase domain; sequence FKEFNELGRG…DLIVKSGLTF (258 aa). ATP contacts are provided by residues 525–533 and lysine 547; that span reads LGRGSFGFV. Catalysis depends on aspartate 644, which acts as the Proton acceptor.

Belongs to the protein kinase superfamily. Ser/Thr protein kinase family. In terms of assembly, homodimer. As to expression, expressed in roots, leaves, shoot apical meristems (SAM), and floral buds.

It localises to the membrane. It catalyses the reaction L-seryl-[protein] + ATP = O-phospho-L-seryl-[protein] + ADP + H(+). The catalysed reaction is L-threonyl-[protein] + ATP = O-phospho-L-threonyl-[protein] + ADP + H(+). In terms of biological role, serine/threonine-protein kinase with low activity. The chain is Serine/threonine-protein kinase-like protein CCR2 (CCR2) from Arabidopsis thaliana (Mouse-ear cress).